A 396-amino-acid chain; its full sequence is Actin-related protein 6 (396 aa).

Position 2 is an N-acetylthreonine (T2). The residue at position 260 (K260) is an N6-acetyllysine.

The protein belongs to the actin family. ARP6 subfamily. As to quaternary structure, component of the chromatin-remodeling SRCAP complex composed of at least SRCAP, DMAP1, RUVBL1, RUVBL2, ACTL6A, YEATS4, ACTR6 and ZNHIT1. Interacts with CBX1, CBX3 and CBX5.

Its subcellular location is the cytoplasm. It localises to the cytoskeleton. The protein resides in the nucleus. It is found in the nucleolus. In terms of biological role, required for formation and/or maintenance of proper nucleolar structure and function. Plays a dual role in the regulation of ribosomal DNA (rDNA) transcription. In the presence of high glucose, maintains active rDNA transcription through H2A.Z deposition and under glucose starvation, is required for the repression of rDNA transcription, and this function may be independent of H2A.Z. This Homo sapiens (Human) protein is Actin-related protein 6 (ACTR6).